We begin with the raw amino-acid sequence, 65 residues long: Large ribosomal subunit protein uL29 (65 aa).

The protein belongs to the universal ribosomal protein uL29 family.

This chain is Large ribosomal subunit protein uL29, found in Coxiella burnetii (strain CbuK_Q154) (Coxiella burnetii (strain Q154)).